We begin with the raw amino-acid sequence, 225 residues long: Riboflavin kinase (225 aa).

The segment at 1 to 89 is unknown; it reads MPDIEYLKKL…SRIFSSEPDT (89 aa). The riboflavin kinase stretch occupies residues 90-225; the sequence is LELEGNVLKG…LKKQGMEGQK (136 aa). Residue 99–104 coordinates CDP; it reads GLGEGQ. Mg(2+) is bound by residues T128 and N130. Residues T185 and E193 each contribute to the FMN site. 198–201 contacts CDP; sequence VKLR.

It belongs to the archaeal riboflavin kinase family. Mg(2+) is required as a cofactor.

It catalyses the reaction riboflavin + CTP = CDP + FMN + H(+). Its pathway is cofactor biosynthesis; FMN biosynthesis; FMN from riboflavin (CTP route): step 1/1. Functionally, catalyzes the CTP-dependent phosphorylation of riboflavin (vitamin B2) to form flavin mononucleotide (FMN). This chain is Riboflavin kinase (ribK), found in Methanosarcina mazei (strain ATCC BAA-159 / DSM 3647 / Goe1 / Go1 / JCM 11833 / OCM 88) (Methanosarcina frisia).